Reading from the N-terminus, the 428-residue chain is Kynureninase (428 aa).

Residues Thr104, Thr105, 132-135 (FPSD), Asp213, His216, and Tyr238 contribute to the pyridoxal 5'-phosphate site. N6-(pyridoxal phosphate)lysine is present on Lys239. Trp267 and Thr295 together coordinate pyridoxal 5'-phosphate.

This sequence belongs to the kynureninase family. In terms of assembly, homodimer. The cofactor is pyridoxal 5'-phosphate.

It catalyses the reaction L-kynurenine + H2O = anthranilate + L-alanine + H(+). The catalysed reaction is 3-hydroxy-L-kynurenine + H2O = 3-hydroxyanthranilate + L-alanine + H(+). Its pathway is amino-acid degradation; L-kynurenine degradation; L-alanine and anthranilate from L-kynurenine: step 1/1. It participates in cofactor biosynthesis; NAD(+) biosynthesis; quinolinate from L-kynurenine: step 2/3. Its function is as follows. Catalyzes the cleavage of L-kynurenine (L-Kyn) and L-3-hydroxykynurenine (L-3OHKyn) into anthranilic acid (AA) and 3-hydroxyanthranilic acid (3-OHAA), respectively. The polypeptide is Kynureninase (Bacillus cereus (strain ATCC 14579 / DSM 31 / CCUG 7414 / JCM 2152 / NBRC 15305 / NCIMB 9373 / NCTC 2599 / NRRL B-3711)).